The following is a 252-amino-acid chain: Adenosylcobinamide-GDP ribazoletransferase (252 aa).

7 consecutive transmembrane segments (helical) span residues 4 to 24, 38 to 58, 60 to 80, 113 to 133, 141 to 161, 190 to 210, and 232 to 252; these read LFKG…PYVE, PIIG…INYL, ISIV…TGML, FSVI…HSFL, ILMF…ITII, LVCI…LLIV, and VAGF…CLFT.

The protein belongs to the CobS family. Mg(2+) is required as a cofactor.

It localises to the cell membrane. The catalysed reaction is alpha-ribazole + adenosylcob(III)inamide-GDP = adenosylcob(III)alamin + GMP + H(+). It catalyses the reaction alpha-ribazole 5'-phosphate + adenosylcob(III)inamide-GDP = adenosylcob(III)alamin 5'-phosphate + GMP + H(+). Its pathway is cofactor biosynthesis; adenosylcobalamin biosynthesis; adenosylcobalamin from cob(II)yrinate a,c-diamide: step 7/7. Functionally, joins adenosylcobinamide-GDP and alpha-ribazole to generate adenosylcobalamin (Ado-cobalamin). Also synthesizes adenosylcobalamin 5'-phosphate from adenosylcobinamide-GDP and alpha-ribazole 5'-phosphate. This chain is Adenosylcobinamide-GDP ribazoletransferase, found in Clostridium botulinum (strain Eklund 17B / Type B).